Consider the following 257-residue polypeptide: Proteasome assembly chaperone 1 (257 aa).

It belongs to the PSMG1 family. As to quaternary structure, forms a heterodimer with psmg2.

Its function is as follows. Chaperone protein which promotes assembly of the 20S proteasome as part of a heterodimer with psmg2. The sequence is that of Proteasome assembly chaperone 1 (psmg1) from Nematostella vectensis (Starlet sea anemone).